A 324-amino-acid polypeptide reads, in one-letter code: Lactonase drp35 (324 aa).

Ca(2+) is bound by residues Glu-47, Ser-109, Gly-111, Asp-129, Thr-132, Tyr-134, Asp-137, Asn-184, Asp-235, and Ser-236. Asp-235 acts as the Proton donor in catalysis.

The protein belongs to the SMP-30/CGR1 family. The cofactor is Ca(2+).

It is found in the cytoplasm. In terms of biological role, exhibits lactonase activity. Acts in cells with perturbed membrane integrity and is possibly related to the membrane homeostasis. This chain is Lactonase drp35 (drp35), found in Staphylococcus aureus (strain MW2).